Reading from the N-terminus, the 1189-residue chain is Intraflagellar transport protein 122 homolog (1189 aa).

WD repeat units follow at residues 16 to 54, 57 to 97, 99 to 135, 137 to 175, 180 to 223, 225 to 264, 266 to 306, and 459 to 498; these read KLEQ…MIQP, GHKD…LKYT, NDSI…VSKH, VSSK…KVKI, GALS…VGKD, VLGF…LGPI, EQNS…HGLY, and KQAT…LLFQ.

In terms of assembly, component of the IFT complex A (IFT-A) complex.

It localises to the cell projection. It is found in the cilium. The protein resides in the cytoplasm. The protein localises to the cytoskeleton. Its subcellular location is the cilium basal body. In terms of biological role, required for cilia formation during embryonal development. Acts as a negative regulator of Shh signaling. In Xenopus tropicalis (Western clawed frog), this protein is Intraflagellar transport protein 122 homolog (ift122).